The following is a 425-amino-acid chain: Inhibin beta A chain (425 aa).

The N-terminal stretch at 1-20 (MPLLWLRGFLLASCWIIVRS) is a signal peptide. Positions 21 to 309 (SPTPGSEGHS…EDHPHRRRRR (289 aa)) are excised as a propeptide. Asparagine 165 carries an N-linked (GlcNAc...) asparagine glycan. The interval 259–289 (KKKKKEEEGEGKKRDGEGGAGGDEEKEQSHR) is disordered. Residues 263–275 (KEEEGEGKKRDGE) are compositionally biased toward basic and acidic residues. 4 cysteine pairs are disulfide-bonded: cysteine 313–cysteine 321, cysteine 320–cysteine 390, cysteine 349–cysteine 422, and cysteine 353–cysteine 424.

Belongs to the TGF-beta family. As to quaternary structure, dimeric, linked by one or more disulfide bonds. Inhibin A is a dimer of alpha/INHA and beta-A/INHBA. Activin A is a homodimer of beta-A/INHBA. Activin AB is a dimer of beta-A/INHBA and beta-B/INHBB. Interacts with FST and FSTL3; these interactions prevent activin A interaction to its type II receptor. Activin A interacts with ACVR2A. Activin A interacts with BMPR2. Inhibin A interacts with ACVR1; this interaction creates a non-signaling complex (NSC) that inhibits ACVR1-mediated BMP signaling. Inhibin A interacts with ACVR2A.

The protein resides in the secreted. Functionally, inhibins/activins are involved in regulating a number of diverse functions such as hypothalamic and pituitary hormone secretion, gonadal hormone secretion, germ cell development and maturation, erythroid differentiation, insulin secretion, nerve cell survival, embryonic axial development or bone growth, depending on their subunit composition. Its function is as follows. Activin A is a homodimer of INHBA that plays a role in several essential biological processes including embryonic development, stem cell maintenance and differentiation, haematopoiesis, cell proliferation and tissue fibrosis. Signals through type I (such as ACVR1B or ACVR1C) and type II receptors (such as ACVR2A, ACVR2B or BMPR2) which, upon ligand binding, phosphorylate SMAD2 and SMAD3 intracellular signaling mediators that form a complex with SMAD4, translocate to the nucleus and modulate gene expression. Can also activate alternative non-canonical intracellular signaling pathways including the p38 MAPK, extracellular signal-regulated kinases 1/2 (ERK1/2) and c-Jun N-terminal kinases (JNKs) to modulate cell migration and differentiation. Alternatively, promotes osteoblastic differentiation via ACVRL1-SMAD1/5/9 pathway. In addition, can engage the type I receptor ACVR1 to form an ACVR1-activin A-type II receptor non-signaling complex (NSC) that renders receptors unavailable for engagement with BMPs, hence resulting in an apparent inhibition of ACVR1-mediated BMP signaling. In terms of biological role, inhibin A is a dimer of alpha/INHA and beta-A/INHBA that functions as a feedback regulator in the hypothalamic-pituitary-gonadal (HPG) axis. Inhibits the secretion of FSH from the anterior pituitary gland by acting on pituitary gonadotrope cells. Antagonizes activin A by binding to the proteoglycan, betaglycan, and forming a stable complex with and, thereby, sequestering type II activin receptors while excluding type I receptor. The sequence is that of Inhibin beta A chain (INHBA) from Bos taurus (Bovine).